The following is a 904-amino-acid chain: MSLVGRVGSLISQGVYSVATPFHPFGGAIDVIVVQQQDGSFRSTPWYVRFGKFQGVLKGAEKFVRISVNGTEADFHMYLDNSGEAYFIREVDPAANDTNNLISGSENNNGNQNNGVTYRLEHSLSDSGTGELREGFDPLSRLERTESDCNRRFYDFQDDPPSPTSEYGSARFDNLNVESYGDSQGSDSEVVLVSIDGHILTAPVSVAEQEAENLRLNTPQFHLAPGDGTEFCEGNTEFASSETPWDTEYIDKVEESSDTANIASDKVDAINDERNDLDSHSRDNAEKDSHDAERDLLGSCLEQSELTKTSENVKSEEPGPTFEDRNLKEGEFPLRTIMENDRSEDEVTIESIDTLVDSFESSTTQITIEEVKTTEGSRISVDSNADSECKDEQTSAETAILFNNQESSISVDSNADSECKDEQPRISAETAILINNQEGGIIESEDQDSERVSIDSTREEVDKDNEDRKTVVSVGVTSSVDEGEPDTDQRYELSLCKDELRQGMGLSAAAEVFDAHMISKEEYINSATSILESENLVVRIRETYMPWTKAARIVLGKAVFDLDLDIQPDDVISVEENESPKPKDDETTITPSSSGTRWRLWPIPFRRVKTVEHTGSNSSSEEDLFVDSEPGLQNSPETQSTTESRHESPRRQLVRTNVPTNEQIASLNLKDGQNMITFSFSTRVLGTQQVDAHIYRWRWDTKIVISDVDGTITKSDVLGQFMPFIGKDWTQSGVAKLFSAIKENGYQLLFLSARAIVQAYLTRNFLNNLKQDGKALPTGPVVISPDGLFPALYREVIRRAPHEFKIACLEDIRKLFPTDYNPFYAGFGNRDTDELSYRKLGIPKGKIFIINPKGEVATGHRIDVKKSYTSLHTLVNDMFPPTSLVEQEDYNPWNFWKLPIEEVE.

An N-LIP region spans residues 1–112; that stretch reads MSLVGRVGSL…SGSENNNGNQ (112 aa). Disordered stretches follow at residues 254 to 293, 305 to 326, 440 to 470, 574 to 595, and 612 to 655; these read EESSDTANIASDKVDAINDERNDLDSHSRDNAEKDSHDAE, ELTKTSENVKSEEPGPTFEDRN, GIIESEDQDSERVSIDSTREEVDKDNEDRKT, VEENESPKPKDDETTITPSSSG, and EHTG…QLVR. Basic and acidic residues-rich tracts occupy residues 265–293, 311–326, and 449–470; these read DKVDAINDERNDLDSHSRDNAEKDSHDAE, ENVKSEEPGPTFEDRN, and SERVSIDSTREEVDKDNEDRKT. Over residues 631-642 the composition is skewed to polar residues; it reads GLQNSPETQSTT. The C-LIP stretch occupies residues 703-857; sequence IVISDVDGTI…FIINPKGEVA (155 aa). The short motif at 707-711 is the DXDXT motif element; the sequence is DVDGT.

The protein belongs to the lipin family. Mg(2+) serves as cofactor. In terms of tissue distribution, expressed in roots, leaves, stems, flowers, siliques, embryos and mature seeds.

It is found in the cytoplasm. It localises to the cytosol. It carries out the reaction a 1,2-diacyl-sn-glycero-3-phosphate + H2O = a 1,2-diacyl-sn-glycerol + phosphate. In terms of biological role, magnesium-dependent phosphatidate phosphatase which catalyzes the dephosphorylation of phosphatidate to yield diacylglycerol. Acts redundantly with PAH2 to repress phospholipid biosynthesis at the endoplasmic reticulum (ER). May function indirectly as repressor of multiple enzymes involved in phospholipid biosynthesis. Is involved in the pathway of galactolipid synthesis in the ER, which is required for the membrane lipid remodeling, an essential adaptation mechanism to cope with phosphate starvation. The protein is Phosphatidate phosphatase PAH1 (PAH1) of Arabidopsis thaliana (Mouse-ear cress).